A 554-amino-acid polypeptide reads, in one-letter code: Hydroxylamine reductase (554 aa).

[2Fe-2S] cluster contacts are provided by C3, C6, C18, and C25. Residues H252, E276, C320, C408, C436, C461, E495, and K497 each contribute to the hybrid [4Fe-2O-2S] cluster site. A Cysteine persulfide modification is found at C408.

It belongs to the HCP family. It depends on [2Fe-2S] cluster as a cofactor. Hybrid [4Fe-2O-2S] cluster serves as cofactor.

The protein localises to the cytoplasm. The catalysed reaction is A + NH4(+) + H2O = hydroxylamine + AH2 + H(+). Functionally, catalyzes the reduction of hydroxylamine to form NH(3) and H(2)O. The polypeptide is Hydroxylamine reductase (Shewanella loihica (strain ATCC BAA-1088 / PV-4)).